A 75-amino-acid chain; its full sequence is UPF0270 protein PFLU_4323 (75 aa).

The protein belongs to the UPF0270 family.

The chain is UPF0270 protein PFLU_4323 from Pseudomonas fluorescens (strain SBW25).